The sequence spans 320 residues: MRQTKTGILLANLGTPDSPTPEAVKRYLKQFLSDRRVVDTSRLLWWPLLRGVILPLRSPRVAKLYASVWMEGGSPLMVYSRQQQQALAQRLPETPVALGMSYGSPSLESAVDELLAEHVDHIVVLPLYPQFSCSTVGAVWDELARILARKRSIPGISFIRDYADNHDYINALANSVRASFAKHGEPDLLLLSYHGIPQRYADEGDDYPQRCRTTTRELASALGMAPEKVMMTFQSRFGREPWLMPYTDETLKMLGEKGVGHIQVMCPGFAADCLETLEEIAEQNREVFLGAGGKKYEYIPALNATPEHIEMMANLVAAYR.

His194 and Glu275 together coordinate Fe cation.

The protein belongs to the ferrochelatase family. In terms of assembly, monomer.

The protein resides in the cytoplasm. It catalyses the reaction heme b + 2 H(+) = protoporphyrin IX + Fe(2+). Its pathway is porphyrin-containing compound metabolism; protoheme biosynthesis; protoheme from protoporphyrin-IX: step 1/1. Functionally, catalyzes the ferrous insertion into protoporphyrin IX. This is Ferrochelatase from Shigella dysenteriae serotype 1 (strain Sd197).